We begin with the raw amino-acid sequence, 246 residues long: Mast cell protease 1 (246 aa).

Residues 1–18 (MQALLFLMALLLPSGAGA) form the signal peptide. A propeptide spans 19 to 20 (EE) (activation peptide). The Peptidase S1 domain occupies 21 to 244 (IIGGVEARPH…YVPWIKTVIN (224 aa)). An intrachain disulfide couples cysteine 50 to cysteine 66. The Charge relay system role is filled by histidine 65. The N-linked (GlcNAc...) asparagine glycan is linked to asparagine 102. Residue aspartate 109 is the Charge relay system of the active site. 2 cysteine pairs are disulfide-bonded: cysteine 143–cysteine 208 and cysteine 174–cysteine 187. Serine 202 serves as the catalytic Charge relay system.

It belongs to the peptidase S1 family. Granzyme subfamily. Mucosal mast cells.

The protein resides in the secreted. It localises to the cytoplasmic granule. In terms of biological role, has a chymotrypsin-like activity. This Mus musculus (Mouse) protein is Mast cell protease 1 (Mcpt1).